Reading from the N-terminus, the 510-residue chain is Aromatic-L-amino-acid decarboxylase (510 aa).

Over residues 1 to 17 (MSHIPISNTIPPKQTDG) the composition is skewed to polar residues. Residues 1–29 (MSHIPISNTIPPKQTDGNGKANISPDKLD) form a disordered region. Thr-117 provides a ligand contact to substrate. The pyridoxal 5'-phosphate site is built by Ala-183, Ser-184, His-227, Asp-305, and Asn-334. His-227 contacts substrate. Residue Lys-337 is modified to N6-(pyridoxal phosphate)lysine. The disordered stretch occupies residues 358–384 (NAFNVDPLYLKHDMQGSAPDYRHWQIP).

The protein belongs to the group II decarboxylase family. Homodimer. Pyridoxal 5'-phosphate serves as cofactor.

The catalysed reaction is L-dopa + H(+) = dopamine + CO2. It catalyses the reaction 5-hydroxy-L-tryptophan + H(+) = serotonin + CO2. Functionally, catalyzes the decarboxylation of L-3,4-dihydroxyphenylalanine (L-DOPA) to dopamine and L-5-hydroxytryptophan (5-HTP) to serotonin. Catalyzes the formation of serotonin more efficiently than dopamine. Displays no activity to tyrosine. Variation in the synthesis of bioamines may be a factor contributing to natural variation in life span. The protein is Aromatic-L-amino-acid decarboxylase (Ddc) of Drosophila simulans (Fruit fly).